Here is a 238-residue protein sequence, read N- to C-terminus: 3-dehydroquinate dehydratase (238 aa).

3-dehydroquinate-binding positions include 35 to 37 (ELR) and Arg70. Residue His133 is the Proton donor/acceptor of the active site. Lys160 (schiff-base intermediate with substrate) is an active-site residue. Positions 202 and 225 each coordinate 3-dehydroquinate.

Belongs to the type-I 3-dehydroquinase family. Homodimer.

It carries out the reaction 3-dehydroquinate = 3-dehydroshikimate + H2O. It functions in the pathway metabolic intermediate biosynthesis; chorismate biosynthesis; chorismate from D-erythrose 4-phosphate and phosphoenolpyruvate: step 3/7. Functionally, involved in the third step of the chorismate pathway, which leads to the biosynthesis of aromatic amino acids. Catalyzes the cis-dehydration of 3-dehydroquinate (DHQ) and introduces the first double bond of the aromatic ring to yield 3-dehydroshikimate. In Staphylococcus aureus (strain MRSA252), this protein is 3-dehydroquinate dehydratase.